The chain runs to 118 residues: Fluoride-specific ion channel FluC 2 (118 aa).

The next 4 helical transmembrane spans lie at 1–21, 33–53, 55–75, and 93–113; these read MMEALLVATGGFFGAITRFAI, FPIATFLINITGAFLLGYIIG, GVTTGWQLLLGTGFMGAFTTF, and ILFLYLSATYIIGILFAFLGM. Residues Gly-70 and Thr-73 each contribute to the Na(+) site.

This sequence belongs to the fluoride channel Fluc/FEX (TC 1.A.43) family.

Its subcellular location is the cell membrane. The enzyme catalyses fluoride(in) = fluoride(out). With respect to regulation, na(+) is not transported, but it plays an essential structural role and its presence is essential for fluoride channel function. Functionally, fluoride-specific ion channel. Important for reducing fluoride concentration in the cell, thus reducing its toxicity. The protein is Fluoride-specific ion channel FluC 2 of Bacillus cereus (strain ATCC 10987 / NRS 248).